The chain runs to 353 residues: Histidinol-phosphate aminotransferase (353 aa).

Lysine 218 bears the N6-(pyridoxal phosphate)lysine mark.

It belongs to the class-II pyridoxal-phosphate-dependent aminotransferase family. Histidinol-phosphate aminotransferase subfamily. In terms of assembly, homodimer. Pyridoxal 5'-phosphate serves as cofactor.

It carries out the reaction L-histidinol phosphate + 2-oxoglutarate = 3-(imidazol-4-yl)-2-oxopropyl phosphate + L-glutamate. Its pathway is amino-acid biosynthesis; L-histidine biosynthesis; L-histidine from 5-phospho-alpha-D-ribose 1-diphosphate: step 7/9. In Synechococcus sp. (strain JA-2-3B'a(2-13)) (Cyanobacteria bacterium Yellowstone B-Prime), this protein is Histidinol-phosphate aminotransferase.